A 72-amino-acid polypeptide reads, in one-letter code: U-poneritoxin(01)-Om7a (72 aa).

The first 27 residues, 1-27, serve as a signal peptide directing secretion; the sequence is MKPSGLTFAFLVVFMMAIMYNSVQVTA. Residues 28 to 45 constitute a propeptide that is removed on maturation; the sequence is DADADAEAEALANALAEA.

The protein belongs to the formicidae venom precursor-01 superfamily. Expressed by the venom gland.

The protein localises to the secreted. Its function is as follows. Peptide with unknown function that does not resemble any other pilosulin-like peptide and appears to have a coiled coil structure. This chain is U-poneritoxin(01)-Om7a, found in Odontomachus monticola (Trap-jaw ant).